The following is a 279-amino-acid chain: Lacto-N-neotetraose biosynthesis glycosyltransferase LgtB (279 aa).

Belongs to the glycosyltransferase 25 family.

Its pathway is glycan metabolism; lacto-N-neotetraose biosynthesis. It functions in the pathway bacterial outer membrane biogenesis; lipooligosaccharide biosynthesis. Adds the second galactose to the lacto-N-tetraose chain in lipooligosaccharide (LOS). This Neisseria gonorrhoeae protein is Lacto-N-neotetraose biosynthesis glycosyltransferase LgtB (lgtB).